The chain runs to 968 residues: MPFALGQRWISDTESELGLGTVVQVEGRMVTVLFPATGENRMFSRNEAPLTRVIYNPGDTVESHEGWSLSVEELTEKDDLVVYHGIHSETGEKVSLRETLLNHNIRFNKPQDRLFAGQIDRLDRFGIRYQCQLLRHQLATSDLLGLQGPRVGLIPHQMWIAHEVGRRYAPRVLLADEVGLGKTIEAGLIIHQQLLTCRAERVLIIVPDTLRHQWLVEMLRRFNLRFSVFDEDRCVEAFADHDNPFYTEQLVICSLELLRKKKRLDQALDADWDLLVVDEAHHLEWTEEAPSRAYQVVEALSEVVPGVLLLTATPDQLGHESHFARLRLLDPDRFYDYDAFLAEENSYKDVAIAAEALAGESKLSDYAINSLTELLSEKDIAPSIRLIQAEGIDSELQQAARSELLQELLDRHGTGRVLYRNSRASVKGFPKRIFNAYPHAMPEQYLTAARVNDMMGGRKSLEAKAAQALSPEKLYQEFEDNSASWWKFDPRVDWLIEFLKSHRSKKVLIIASGADTALSLEEALRTREGIQATVFHEGMSIIERDKAGAYFAQEEGGAQALICSEIGSEGRNFQFASHLVLFDLPLNPDLLEQRIGRLDRIGQKNDIQIHLPYLQDTAQERLLQWYHQGLNAFELTCPGGHILFSEFAEELLNVLVGGDEDELTNLLNHTQSRYKELKHAMEQGRDKLLEINSHGGDKAKAIVERLAQSDQDTKLIGSVIRLWDIIGVDQEDKGENSIILRPSEHMMFPTYPGLHEDGVTVTFDRDTALSRDDIALITQEHPLVQTGLDLITGSDTGTTSVAILKNKALPAGTLFLELIYMADASAPKSSQLYRYLPPTPIRILLDKNGNDLSAKVDYTSFDKQLSAVNRHIGSKLVTASQPILHPLFAKGEEYAQVAVNELVAQAREKMTSQLTGELERLESLKAVNPNIREEELEYLRNQMQELTTYLDASQLQLDAIRMVLVSHV.

A Helicase ATP-binding domain is found at Glu-163–Asp-332. An ATP-binding site is contributed by Asp-176–Thr-183. The DEAH box motif lies at Asp-278 to His-281. Residues Arg-491–Leu-655 form the Helicase C-terminal domain.

This sequence belongs to the SNF2/RAD54 helicase family. RapA subfamily. Interacts with the RNAP. Has a higher affinity for the core RNAP than for the holoenzyme. Its ATPase activity is stimulated by binding to RNAP.

Functionally, transcription regulator that activates transcription by stimulating RNA polymerase (RNAP) recycling in case of stress conditions such as supercoiled DNA or high salt concentrations. Probably acts by releasing the RNAP, when it is trapped or immobilized on tightly supercoiled DNA. Does not activate transcription on linear DNA. Probably not involved in DNA repair. This Shewanella oneidensis (strain ATCC 700550 / JCM 31522 / CIP 106686 / LMG 19005 / NCIMB 14063 / MR-1) protein is RNA polymerase-associated protein RapA.